The primary structure comprises 453 residues: Chromosomal replication initiator protein DnaA (453 aa).

Positions 1-76 (MSGDAAALWP…LAWRQQLPAV (76 aa)) are domain I, interacts with DnaA modulators. The domain II stretch occupies residues 76-115 (VRSVSVRGGVAATERAATLASVPLPTFDAPAAPAANPALL). A domain III, AAA+ region region spans residues 116–333 (GFDPRLSFDR…GALNKLLAYA (218 aa)). 4 residues coordinate ATP: Gly160, Gly162, Lys163, and Thr164. The domain IV, binds dsDNA stretch occupies residues 334-453 (ALTGARIDLM…IAAIRRSLNS (120 aa)).

The protein belongs to the DnaA family. As to quaternary structure, oligomerizes as a right-handed, spiral filament on DNA at oriC.

Its subcellular location is the cytoplasm. In terms of biological role, plays an essential role in the initiation and regulation of chromosomal replication. ATP-DnaA binds to the origin of replication (oriC) to initiate formation of the DNA replication initiation complex once per cell cycle. Binds the DnaA box (a 9 base pair repeat at the origin) and separates the double-stranded (ds)DNA. Forms a right-handed helical filament on oriC DNA; dsDNA binds to the exterior of the filament while single-stranded (ss)DNA is stabiized in the filament's interior. The ATP-DnaA-oriC complex binds and stabilizes one strand of the AT-rich DNA unwinding element (DUE), permitting loading of DNA polymerase. After initiation quickly degrades to an ADP-DnaA complex that is not apt for DNA replication. Binds acidic phospholipids. In Sphingopyxis alaskensis (strain DSM 13593 / LMG 18877 / RB2256) (Sphingomonas alaskensis), this protein is Chromosomal replication initiator protein DnaA.